We begin with the raw amino-acid sequence, 451 residues long: Tubulin alpha-2 chain (451 aa).

Glutamine 11 provides a ligand contact to GTP. Lysine 40 carries the N6-acetyllysine modification. GTP-binding residues include glutamate 71, glycine 144, threonine 145, threonine 179, asparagine 206, and asparagine 228. Glutamate 71 contacts Mg(2+). Glutamate 254 is a catalytic residue.

The protein belongs to the tubulin family. In terms of assembly, dimer of alpha and beta chains. A typical microtubule is a hollow water-filled tube with an outer diameter of 25 nm and an inner diameter of 15 nM. Alpha-beta heterodimers associate head-to-tail to form protofilaments running lengthwise along the microtubule wall with the beta-tubulin subunit facing the microtubule plus end conferring a structural polarity. Microtubules usually have 13 protofilaments but different protofilament numbers can be found in some organisms and specialized cells. It depends on Mg(2+) as a cofactor. Undergoes a tyrosination/detyrosination cycle, the cyclic removal and re-addition of a C-terminal tyrosine residue by the enzymes tubulin tyrosine carboxypeptidase (TTCP) and tubulin tyrosine ligase (TTL), respectively. Post-translationally, acetylation of alpha chains at Lys-40 stabilizes microtubules and affects affinity and processivity of microtubule motors. This modification has a role in multiple cellular functions, ranging from cell motility, cell cycle progression or cell differentiation to intracellular trafficking and signaling.

The protein resides in the cytoplasm. The protein localises to the cytoskeleton. The catalysed reaction is GTP + H2O = GDP + phosphate + H(+). Tubulin is the major constituent of microtubules, a cylinder consisting of laterally associated linear protofilaments composed of alpha- and beta-tubulin heterodimers. Microtubules grow by the addition of GTP-tubulin dimers to the microtubule end, where a stabilizing cap forms. Below the cap, tubulin dimers are in GDP-bound state, owing to GTPase activity of alpha-tubulin. The polypeptide is Tubulin alpha-2 chain (TUBA2) (Hordeum vulgare (Barley)).